The sequence spans 142 residues: Universal stress protein C (142 aa).

This sequence belongs to the universal stress protein A family.

The protein localises to the cytoplasm. Functionally, required for resistance to DNA-damaging agents. The sequence is that of Universal stress protein C (uspC) from Salmonella typhimurium (strain LT2 / SGSC1412 / ATCC 700720).